The chain runs to 457 residues: C4-dicarboxylate transport protein (457 aa).

A run of 9 helical transmembrane segments spans residues 22–42 (FQVVVAIILGALLGRFEPAFA), 55–75 (LVKMIIAPVIFLTIVTGIAGM), 90–110 (VYFLFFSTLALVVGLVVAHVV), 138–158 (LTLVGFLMDIIPNSLIGAFTG), 168–188 (GPNILQVLFVAVLFGVSLALV), 209–229 (LVHILMRAAPIGAFGAIAFTI), 242–262 (WLVGSFYLTSLLFVLVILGVV), 335–357 (LFIAQATNTELTLGHQIALLAVA), and 376–396 (AATLAVVPEVPVAGMALILGV).

It belongs to the dicarboxylate/amino acid:cation symporter (DAACS) (TC 2.A.23) family.

The protein resides in the cell inner membrane. Responsible for the transport of dicarboxylates such as succinate, fumarate, and malate from the periplasm across the membrane. This chain is C4-dicarboxylate transport protein, found in Xanthomonas oryzae pv. oryzae (strain MAFF 311018).